Here is a 164-residue protein sequence, read N- to C-terminus: MEMLQGLLLCLLLSTGGAWASKEPLRPLCRPVNAILAAEKEGCPVCVAFNTTICAGYCSSMVRVLQTILPPLPQSVCNYHELRFTSVRLPGCRPGVDPVVSMPVALSCRCGLCRRSYSDCGSLRNEPLGCDYSTFQDSSSKDPPRNLTSPSQLLEPADPPLVPQ.

The N-terminal stretch at 1 to 20 (MEMLQGLLLCLLLSTGGAWA) is a signal peptide. 6 disulfide bridges follow: C29–C77, C43–C92, C46–C130, C54–C108, C58–C110, and C113–C120. Residue N50 is glycosylated (N-linked (GlcNAc...) asparagine). The disordered stretch occupies residues 135 to 164 (FQDSSSKDPPRNLTSPSQLLEPADPPLVPQ). A glycan (O-linked (GalNAc...) serine) is linked at S140. N-linked (GlcNAc...) asparagine glycosylation occurs at N146. O-linked (GalNAc...) serine glycosylation occurs at S151.

This sequence belongs to the glycoprotein hormones subunit beta family. In terms of assembly, heterodimer of a common alpha chain and a unique beta chain which confers biological specificity to thyrotropin, lutropin, follitropin and gonadotropin. Placenta.

Its subcellular location is the secreted. In terms of biological role, stimulates the ovaries to synthesize the steroids that are essential for the maintenance of pregnancy. This Callithrix jacchus (White-tufted-ear marmoset) protein is Choriogonadotropin subunit beta (CGB).